The following is a 437-amino-acid chain: Probable N-acetylmuramidase (437 aa).

The signal sequence occupies residues 1-57; it reads MPVSRVKVKNRHLKKKTKKPLAFYKPATKFAGAVLIAGTLTTTHELLLQQTSPMVQA. 3 disordered regions span residues 217–244, 290–320, and 367–392; these read SSAG…SSTT, ASST…SQTT, and AASN…NSNA. The 44-residue stretch at 243 to 286 folds into the LysM 1 domain; that stretch reads TTYTVKSGDTLWGISQRYGISVAQIQSANNLKSTIIYIGQKLVL. Positions 290–317 are enriched in low complexity; sequence ASSTNSGGSNNSASTTPTTSVTPAKPTS. Positions 319–362 constitute a LysM 2 domain; it reads TTVKVKSGDTLWALSVKYKTSIAQLKSWNHLSSDTIYIGQNLIV. The LysM 3 domain maps to 393–436; that stretch reads SIHKVVKGDTLWGLSQKSGSPIASIKAWNHLSSDTILIGQYLRI.

The protein belongs to the glycosyl hydrolase 73 family.

The protein localises to the secreted. The enzyme catalyses Hydrolysis of (1-&gt;4)-beta-linkages between N-acetylmuramic acid and N-acetyl-D-glucosamine residues in a peptidoglycan and between N-acetyl-D-glucosamine residues in chitodextrins.. Hydrolyzes the cell wall of L.lactis and M.lysodeikticus. Required for cell separation during growth. This Lactococcus lactis subsp. cremoris (strain MG1363) protein is Probable N-acetylmuramidase (acmA).